The primary structure comprises 831 residues: Probable inactive serine/threonine-protein kinase DDB_G0274613 (831 aa).

An RING-type zinc finger spans residues 9–63 (CSICSEEVIDFAAIFSSNKKFGDKACKHNFCVSCLTYLMEYNTRNKKALCCPICR). Residues 83–348 (RKLSSAQIFL…LEEMKLLYQF (266 aa)) adopt a coiled-coil conformation. Residues 414–787 (QIHKVSIGNG…ANQAAFHKFF (374 aa)) enclose the Protein kinase domain. The disordered stretch occupies residues 657–703 (NNNNNNNNNNNNNNNNNNNNNNNNNNNNNNNNNNNNNNNNNIESNFN).

This sequence belongs to the protein kinase superfamily. CMGC Ser/Thr protein kinase family.

This chain is Probable inactive serine/threonine-protein kinase DDB_G0274613, found in Dictyostelium discoideum (Social amoeba).